A 594-amino-acid polypeptide reads, in one-letter code: Solute carrier family 13 member 1 (594 aa).

5 helical membrane passes run 13 to 33 (FLLV…IRTK), 40 to 60 (ILFV…ITAL), 77 to 97 (VASA…CLAT), 113 to 133 (VMMV…STAF), and 134 to 154 (LSMW…VEAV). N174 carries N-linked (GlcNAc...) asparagine glycosylation. Positions 192-220 (TNEKKEKTKPAPGSSHDKGKVSRKMETEK) are enriched in basic and acidic residues. Residues 192–226 (TNEKKEKTKPAPGSSHDKGKVSRKMETEKNAVTGA) are disordered. A run of 8 helical transmembrane segments spans residues 239–259 (LMCL…ITGT), 283–303 (SWFL…WIWL), 347–367 (IVTL…DPGF), 380–400 (GYVT…LIPA), 461–481 (LSPL…LIVT), 487–507 (ASNP…AEAI), 511–531 (PLQI…LPVA), and 552–572 (AGLG…FTWI). N590 carries N-linked (GlcNAc...) asparagine glycosylation.

It belongs to the SLC13A/DASS transporter (TC 2.A.47) family. NADC subfamily. In terms of tissue distribution, highly expressed in kidney and ileum, detected at lower levels in duodenum/jejunum and colon, and at very low levels in cecum, testis, adrenal and adipose tissues. Expressed in the kidney.

The protein resides in the apical cell membrane. It catalyses the reaction sulfate(out) + 3 Na(+)(out) = sulfate(in) + 3 Na(+)(in). It carries out the reaction selenate(out) + 3 Na(+)(out) = selenate(in) + 3 Na(+)(in). The catalysed reaction is thiosulfate(out) + 3 Na(+)(out) = thiosulfate(in) + 3 Na(+)(in). Functionally, sodium:sulfate symporter that mediates sulfate reabsorption in the kidney and small intestine. Can also mediate the transport of selenate and thiosulfate. The sequence is that of Solute carrier family 13 member 1 (Slc13a1) from Mus musculus (Mouse).